The primary structure comprises 131 residues: Large ribosomal subunit protein bL17 (131 aa).

This sequence belongs to the bacterial ribosomal protein bL17 family. Part of the 50S ribosomal subunit. Contacts protein L32.

The sequence is that of Large ribosomal subunit protein bL17 from Methylibium petroleiphilum (strain ATCC BAA-1232 / LMG 22953 / PM1).